The sequence spans 360 residues: Histidinol-phosphate aminotransferase (360 aa).

K223 bears the N6-(pyridoxal phosphate)lysine mark.

This sequence belongs to the class-II pyridoxal-phosphate-dependent aminotransferase family. Histidinol-phosphate aminotransferase subfamily. In terms of assembly, homodimer. Pyridoxal 5'-phosphate serves as cofactor.

It catalyses the reaction L-histidinol phosphate + 2-oxoglutarate = 3-(imidazol-4-yl)-2-oxopropyl phosphate + L-glutamate. It participates in amino-acid biosynthesis; L-histidine biosynthesis; L-histidine from 5-phospho-alpha-D-ribose 1-diphosphate: step 7/9. The protein is Histidinol-phosphate aminotransferase of Bacillus velezensis (strain DSM 23117 / BGSC 10A6 / LMG 26770 / FZB42) (Bacillus amyloliquefaciens subsp. plantarum).